The following is a 305-amino-acid chain: Glycine--tRNA ligase alpha subunit (305 aa).

It belongs to the class-II aminoacyl-tRNA synthetase family. In terms of assembly, tetramer of two alpha and two beta subunits.

The protein localises to the cytoplasm. The enzyme catalyses tRNA(Gly) + glycine + ATP = glycyl-tRNA(Gly) + AMP + diphosphate. This is Glycine--tRNA ligase alpha subunit from Streptococcus pneumoniae (strain CGSP14).